Reading from the N-terminus, the 173-residue chain is Pyridoxal 5'-phosphate synthase subunit PdxT (173 aa).

L-glutamine is bound at residue 49-51 (GES). Cysteine 81 functions as the Nucleophile in the catalytic mechanism. L-glutamine contacts are provided by residues arginine 113 and 141–142 (IR).

The protein belongs to the glutaminase PdxT/SNO family. As to quaternary structure, in the presence of PdxS, forms a dodecamer of heterodimers. Only shows activity in the heterodimer.

It catalyses the reaction aldehydo-D-ribose 5-phosphate + D-glyceraldehyde 3-phosphate + L-glutamine = pyridoxal 5'-phosphate + L-glutamate + phosphate + 3 H2O + H(+). It carries out the reaction L-glutamine + H2O = L-glutamate + NH4(+). Its pathway is cofactor biosynthesis; pyridoxal 5'-phosphate biosynthesis. In terms of biological role, catalyzes the hydrolysis of glutamine to glutamate and ammonia as part of the biosynthesis of pyridoxal 5'-phosphate. The resulting ammonia molecule is channeled to the active site of PdxS. This Mycolicibacterium paratuberculosis (strain ATCC BAA-968 / K-10) (Mycobacterium paratuberculosis) protein is Pyridoxal 5'-phosphate synthase subunit PdxT.